The chain runs to 559 residues: 2,3-bisphosphoglycerate-independent phosphoglycerate mutase (559 aa).

Positions 28 and 81 each coordinate Mn(2+). The active-site Phosphoserine intermediate is the serine 81. Substrate is bound by residues histidine 140, 170-171 (RD), arginine 206, arginine 213, 286-289 (RADR), and lysine 361. 5 residues coordinate Mn(2+): aspartate 430, histidine 434, aspartate 471, histidine 472, and histidine 501.

Belongs to the BPG-independent phosphoglycerate mutase family. Monomer. Requires Mn(2+) as cofactor. In terms of processing, the N-terminus is blocked. In terms of tissue distribution, found ubiquitously in germinating seed.

The protein resides in the cytoplasm. It carries out the reaction (2R)-2-phosphoglycerate = (2R)-3-phosphoglycerate. It participates in carbohydrate degradation; glycolysis; pyruvate from D-glyceraldehyde 3-phosphate: step 3/5. Functionally, catalyzes the interconversion of 2-phosphoglycerate and 3-phosphoglycerate. In Zea mays (Maize), this protein is 2,3-bisphosphoglycerate-independent phosphoglycerate mutase.